The primary structure comprises 1224 residues: uncharacterized protein (1224 aa).

6 disordered regions span residues 1–67 (MNQD…SSSI), 111–151 (QQSH…PPPL), 193–270 (QTEL…DPNI), 316–416 (DYNN…TVKK), 430–957 (SDSG…QEEK), and 1078–1167 (SFLP…TSHV). A compositionally biased stretch (low complexity) spans 10 to 48 (SFHSNNNSNSNHHHSYNNSINSGSSSSGSNNSSNNNSFN). Positions 49 to 58 (DEIEGGEIQE) are enriched in acidic residues. Composition is skewed to low complexity over residues 126–140 (SSSS…SSSS), 193–212 (QTEL…SSPP), and 228–241 (SAPT…SVSS). Polar residues predominate over residues 242-255 (LTQPQKPKSVQYSQ). Over residues 260 to 270 (EIREEKVDPNI) the composition is skewed to basic and acidic residues. Low complexity predominate over residues 316-338 (DYNNSNSNNSNNNNNNNNSITEN). Residues 341–353 (DKMINNQPSSTNS) are compositionally biased toward polar residues. Composition is skewed to low complexity over residues 379 to 413 (TTTT…TTPT) and 430 to 450 (SDSG…TSTP). Basic and acidic residues-rich tracts occupy residues 451–585 (KSKD…DKKK) and 630–646 (EIDK…KVES). A compositionally biased stretch (low complexity) spans 662–719 (TTTTTTSTSSSSSLPSLSSSSSSLPLPSSSSSSSSSSSSSSSSSSSSSSSSSSSTTST). A compositionally biased stretch (pro residues) spans 727–750 (PPPPPQQPPPPPPQQPPPPPPPIN). Residues 755–892 (SEHDKKIIEK…SDRDRDRKDS (138 aa)) show a composition bias toward basic and acidic residues. Residues 893–933 (NSNNNSNNNNNNNNNNNNNNNNNNNNKKDNNNNNNNNNNNN) are compositionally biased toward low complexity. Residues 948–957 (TPKKTKQEEK) are compositionally biased toward basic and acidic residues. Residues 950–991 (KKTKQEEKLIRSQIDQIKEDAKDLKKLAKELQSKNQNECLEM) adopt a coiled-coil conformation. Low complexity-rich tracts occupy residues 1078–1108 (SFLP…TAPL) and 1114–1165 (NPSE…PNTS).

This is an uncharacterized protein from Dictyostelium discoideum (Social amoeba).